Reading from the N-terminus, the 310-residue chain is Aspartate carbamoyltransferase catalytic subunit (310 aa).

Residues R59 and T60 each coordinate carbamoyl phosphate. K87 contributes to the L-aspartate binding site. The carbamoyl phosphate site is built by R109, H139, and Q142. L-aspartate-binding residues include R172 and R224. A265 and P266 together coordinate carbamoyl phosphate.

It belongs to the aspartate/ornithine carbamoyltransferase superfamily. ATCase family. In terms of assembly, heterododecamer (2C3:3R2) of six catalytic PyrB chains organized as two trimers (C3), and six regulatory PyrI chains organized as three dimers (R2).

The catalysed reaction is carbamoyl phosphate + L-aspartate = N-carbamoyl-L-aspartate + phosphate + H(+). The protein operates within pyrimidine metabolism; UMP biosynthesis via de novo pathway; (S)-dihydroorotate from bicarbonate: step 2/3. Functionally, catalyzes the condensation of carbamoyl phosphate and aspartate to form carbamoyl aspartate and inorganic phosphate, the committed step in the de novo pyrimidine nucleotide biosynthesis pathway. The polypeptide is Aspartate carbamoyltransferase catalytic subunit (Lactococcus lactis subsp. cremoris (strain MG1363)).